The primary structure comprises 138 residues: Transposon Tn10 TetD protein (138 aa).

An HTH araC/xylS-type domain is found at 31–129 (KDVLLWIEHN…KVTPSYYRRN (99 aa)). DNA-binding regions (H-T-H motif) lie at residues 48–69 (DDVANKAGYTKWYFQRLFKKVT) and 96–119 (ILEIALKYQFDSQQSFTRRFKYIF).

This chain is Transposon Tn10 TetD protein (tetD), found in Escherichia coli.